The chain runs to 115 residues: MKLVHGIDIIEWNREELNNPLFAKRILIDNELEYYFQLNSSREKKRYLASVFACKEAVMKALKLKYGYGDILILKTENQRQVYLNKILIKELELSISYTETYIVASVVGLINNMN.

D8 and E56 together coordinate Mg(2+).

The protein belongs to the P-Pant transferase superfamily. AcpS family. Mg(2+) is required as a cofactor.

It localises to the cytoplasm. It catalyses the reaction apo-[ACP] + CoA = holo-[ACP] + adenosine 3',5'-bisphosphate + H(+). Transfers the 4'-phosphopantetheine moiety from coenzyme A to a Ser of acyl-carrier-protein. The sequence is that of Holo-[acyl-carrier-protein] synthase from Ureaplasma parvum serovar 3 (strain ATCC 27815 / 27 / NCTC 11736).